We begin with the raw amino-acid sequence, 423 residues long: MVFSNSDDGLINKKLPKELLLRIFSFLDIVTLCRCAQISKAWNILALDGSNWQRVDLFNFQTDVEGRVVENISKRCGGFLRKLSLRGCIGVGDSSLKTFAQNCRNIEHLNLNGCTKITDSTCYSLSRFCSKLKHLDLTSCVSVTNSSLKGISEGCRNLEYLNLSWCDQITKEGIEALVRGCRGLKALLLRGCTQLEDEALKHIQNHCHELVSLNLQSCSRITDDGVVQICRGCHRLQALCLSGCSNLTDASLTALGLNCPRLQVLEAARCSHLTDAGFTLLARNCHELEKMDLEECVLITDSTLVQLSIHCPKLQALSLSHCELITDEGILHLSSSTCGHERLRVLELDNCLLVTDASLEHLENCRGLERLELYDCQQVTRAGIKRMRAQLPHVKVHAYFAPVTPPPAVAGSGHRLCRCCVIL.

Positions 9 to 55 constitute an F-box domain; the sequence is GLINKKLPKELLLRIFSFLDIVTLCRCAQISKAWNILALDGSNWQRV. 13 LRR repeats span residues 61-87, 88-113, 114-139, 140-165, 166-191, 192-217, 218-243, 244-269, 270-295, 296-321, 322-350, 351-375, and 376-401; these read QTDVEGRVVENISKRCGGFLRKLSLRG, CIGVGDSSLKTFAQNCRNIEHLNLNG, CTKITDSTCYSLSRFCSKLKHLDLTS, CVSVTNSSLKGISEGCRNLEYLNLSW, CDQITKEGIEALVRGCRGLKALLLRG, CTQLEDEALKHIQNHCHELVSLNLQS, CSRITDDGVVQICRGCHRLQALCLSG, CSNLTDASLTALGLNCPRLQVLEAAR, CSHLTDAGFTLLARNCHELEKMDLEE, CVLITDSTLVQLSIHCPKLQALSLSH, CELITDEGILHLSSSTCGHERLRVLELDN, CLLVTDASLEHLENCRGLERLELYD, and CQQVTRAGIKRMRAQLPHVKVHAYFA. Positions 80 to 90 are interaction with Calmodulin; sequence LRKLSLRGCIG. Residue Lys-201 forms a Glycyl lysine isopeptide (Lys-Gly) (interchain with G-Cter in ubiquitin) linkage. Thr-404 is subject to Phosphothreonine; by GSK3-beta. Cys-420 is lipidated: S-geranylgeranyl cysteine. Residues 420–423 carry the CAAX motif motif; it reads CVIL.

As to quaternary structure, part of the SCF (SKP1-CUL1-F-box) E3 ubiquitin-protein ligase complex SCF(FBXL2) composed of CUL1, SKP1, RBX1 and FBXL2. Interacts with calmodulin; may antagonize substrate ubiquitination by SCF(FBXL2). May interact with PIK3R1. Interacts with PTPN13. In terms of processing, phosphorylated by GSK-beta (GSK3B), promoting recognition by FBXO3, leading to its ubiquitination by the SCF(FBXO3) complex. Post-translationally, ubiquitinated at Lys-201 by the SCF(FBXO3) complex in response to lipopolysaccharide (LPS), leading to its degradation by the proteasome.

It localises to the membrane. It functions in the pathway protein modification; protein ubiquitination. Calcium-activated substrate recognition component of the SCF (SKP1-cullin-F-box protein) E3 ubiquitin-protein ligase complex, SCF(FBXL2), which mediates the ubiquitination and subsequent proteasomal degradation of target proteins. Unlike many F-box proteins, FBXL2 does not seem to target phosphodegron within its substrates but rather calmodulin-binding motifs and is thereby antagonized by calmodulin. This is the case for the cyclins CCND2 and CCND3 which polyubiquitination and subsequent degradation are inhibited by calmodulin. Through CCND2 and CCND3 degradation induces cell-cycle arrest in G(0). SCF(FBXL2) also mediates PIK3R2 ubiquitination and proteasomal degradation thereby regulating phosphatidylinositol 3-kinase signaling and autophagy. PCYT1A monoubiquitination by SCF(FBXL2) and subsequent degradation regulates synthesis of phosphatidylcholine, which is utilized for formation of membranes and of pulmonary surfactant. The SCF(FBXL2) complex acts as a regulator of inflammation by mediating ubiquitination and degradation of TRAF proteins (TRAF1, TRAF2, TRAF3, TRAF4, TRAF5 and TRAF6). The SCF(FBXL2) complex acts as a negative regulator of the NLRP3 inflammasome by mediating ubiquitination and degradation of NLRP3. The sequence is that of F-box/LRR-repeat protein 2 from Mus musculus (Mouse).